The chain runs to 592 residues: Ferric-chelate reductase 1 (592 aa).

Residues 2–22 form a helical membrane-spanning segment; that stretch reads AVSGFTLGTCILLLHISYVAN. Residues 13–179 form the Reelin domain; sequence LLLHISYVAN…FTTPKATVVP (167 aa). N138, N308, and N321 each carry an N-linked (GlcNAc...) asparagine glycan. The DOMON domain maps to 216-331; sequence EASCVFLSFT…TSYYIFLADG (116 aa). One can recognise a Cytochrome b561 domain in the interval 335–534; sequence DGRIYKHSQQ…VGTEVVLEVH (200 aa). A helical transmembrane segment spans residues 372-392; sequence VHGALMFVAWMTTVSIGVLVA. H373 and H414 together coordinate heme b. 2 helical membrane-spanning segments follow: residues 415–435 and 446–466; these read RMLM…PFIY and HPYL…LAVF. Residues H446 and H482 each contribute to the heme b site. A run of 3 helical transmembrane segments spans residues 491–511, 515–535, and 569–589; these read IIAV…LPDS, YAMT…EVHA, and AVLA…LSAI.

This sequence belongs to the FRRS1 family. Requires heme b as cofactor.

The protein resides in the membrane. Functionally, ferric-chelate reductases reduce Fe(3+) to Fe(2+) before its transport from the endosome to the cytoplasm. This Homo sapiens (Human) protein is Ferric-chelate reductase 1 (FRRS1).